The sequence spans 357 residues: Leucoanthocyanidin dioxygenase (357 aa).

Positions 212-311 (LLLQMKINYY…RISWAVFCEP (100 aa)) constitute a Fe2OG dioxygenase domain. Fe cation-binding residues include histidine 236, aspartate 238, and histidine 292.

Belongs to the iron/ascorbate-dependent oxidoreductase family. The cofactor is Fe cation. Requires L-ascorbate as cofactor.

It catalyses the reaction a (2R,3S,4S)-leucoanthocyanidin + 2-oxoglutarate + O2 = a 4-H-anthocyanidin with a 3-hydroxy group + succinate + CO2 + 2 H2O. It participates in pigment biosynthesis; anthocyanin biosynthesis. Its function is as follows. Oxidation of leucoanthocyanidins into anthocyanidins. The polypeptide is Leucoanthocyanidin dioxygenase (ANS) (Malus domestica (Apple)).